An 881-amino-acid polypeptide reads, in one-letter code: Receptor-like protein 41 (881 aa).

Positions 1-21 (MSELLLRLNFLLLLLLSCVSP) are cleaved as a signal peptide. Residues 22–844 (SSFVTFNNPV…EEQEQVLNWE (823 aa)) lie on the Extracellular side of the membrane. N-linked (GlcNAc...) asparagine glycosylation is found at Asn-58, Asn-70, Asn-91, Asn-109, and Asn-145. LRR repeat units follow at residues 97-121 (FHELRSLLLIHNNFTSSSISSKFGM), 122-145 (LNKLEVLFLSSSGFLGQVPFSFSN), 146-169 (LSMLSALDLSDNELTGSLSFVRNL), 170-195 (RKLRVLDVSYNHFSGILNPNSSLFEL), 197-219 (HLTYLSLGSNSFTSSTLPYEFGN), 220-244 (LNKLELLDVSSNSFFGQVPPTISNL), 245-267 (TQLTELYLPLNDFTGSLPLVQNL), 268-291 (TKLSILALFGNHFSGTIPSSLFTM), 293-317 (FLSYLSLKGNNLNGSIEVPNSSSSS), 319-340 (LESLYLGKNHFEGKILKPISKL), 342-364 (NLKELDLSFLSTSYPIDLSLFSS), 365-390 (FKSLLVLDLTGDWISQAGLSSDSYIS), 391-412 (LTLEALYMKQCNISDFPNILKS), 413-437 (LPNLECIDVSNNRVSGKIPEWLWSL), 439-462 (RLSSVFIGDNLLTGFEGSSEILVN), and 463-486 (SSVQILVLDSNSLEGALPHLPLSI). An N-linked (GlcNAc...) asparagine glycan is attached at Asn-189. N-linked (GlcNAc...) asparagine glycosylation is found at Asn-243 and Asn-266. Residues Asn-305 and Asn-312 are each glycosylated (N-linked (GlcNAc...) asparagine). An N-linked (GlcNAc...) asparagine glycan is attached at Asn-402. Asn-462 carries an N-linked (GlcNAc...) asparagine glycan. One copy of the LRR 17; degenerate repeat lies at 487–506 (IYFSARYNRFKGDIPLSICN). Residues Asn-506 and Asn-519 are each glycosylated (N-linked (GlcNAc...) asparagine). 10 LRR repeats span residues 507-528 (RSSLDVLDLRYNNFTGPIPPCL), 529-552 (SNLLFLNLRKNNLEGSIPDTYFAD), 554-576 (PLRSLDVGYNRLTGKLPRSLLNC), 578-599 (ALQFLSVDHNGIEDTFPFYLKV), 600-624 (LPKLQVLLLSSNKFYGPLSPPNQGS), 627-651 (FPELRILEIAGNKLTGSLPQDFFVN), 701-724 (TSSATIDLSGNRLEGEIPESIGLL), 725-748 (KALIALNLSNNAFTGHIPLSLANL), 749-772 (VKIESLDLSSNQLSGTIPNGLGTL), and 774-797 (FLAYVNVSHNQLNGEIPQGTQITG). N-linked (GlcNAc...) asparagine glycosylation is present at Asn-575. A glycan (N-linked (GlcNAc...) asparagine) is linked at Asn-731. N-linked (GlcNAc...) asparagine glycosylation occurs at Asn-779. Residues 845 to 865 (GVAIGYGVGVLLGLAIAQLIA) form a helical membrane-spanning segment. At 866 to 881 (SYKPEWLACLIKSRNR) the chain is on the cytoplasmic side.

It belongs to the RLP family.

It is found in the cell membrane. Functionally, may be involved in ABA-induced senescence responses. This is Receptor-like protein 41 from Arabidopsis thaliana (Mouse-ear cress).